The primary structure comprises 91 residues: Large ribosomal subunit protein uL23 (91 aa).

It belongs to the universal ribosomal protein uL23 family. Part of the 50S ribosomal subunit. Contacts protein L29, and trigger factor when it is bound to the ribosome.

Functionally, one of the early assembly proteins it binds 23S rRNA. One of the proteins that surrounds the polypeptide exit tunnel on the outside of the ribosome. Forms the main docking site for trigger factor binding to the ribosome. This chain is Large ribosomal subunit protein uL23, found in Staphylococcus saprophyticus subsp. saprophyticus (strain ATCC 15305 / DSM 20229 / NCIMB 8711 / NCTC 7292 / S-41).